Reading from the N-terminus, the 660-residue chain is Probable serine/threonine-protein kinase CE0033 (660 aa).

The region spanning 9–278 is the Protein kinase domain; that stretch reads YELGASIGSG…AEMAADLELL (270 aa). ATP is bound by residues 15-23 and Lys-38; that span reads IGSGGMSEV. The active-site Proton acceptor is the Asp-136. The interval 288-319 is disordered; sequence RAHVEKPDEPETVVVPQRLSTPPPPPTPAMPA. PASTA domains lie at 377 to 443, 444 to 512, and 513 to 577; these read SAST…TISS, GREV…TVST, and GPSL…EISN.

Belongs to the protein kinase superfamily. Ser/Thr protein kinase family.

It carries out the reaction L-seryl-[protein] + ATP = O-phospho-L-seryl-[protein] + ADP + H(+). The enzyme catalyses L-threonyl-[protein] + ATP = O-phospho-L-threonyl-[protein] + ADP + H(+). The polypeptide is Probable serine/threonine-protein kinase CE0033 (Corynebacterium efficiens (strain DSM 44549 / YS-314 / AJ 12310 / JCM 11189 / NBRC 100395)).